A 319-amino-acid chain; its full sequence is Molybdenum cofactor biosynthesis bifunctional protein (319 aa).

Residues 1–145 (MIDVGDKAVT…GKSGHWQRPA (145 aa)) form a molybdenum cofactor biosynthesis protein C region. Substrate is bound by residues 61–63 (LCH) and 99–100 (ME). Residue Asp114 is part of the active site. The molybdenum cofactor biosynthesis protein B stretch occupies residues 146 to 319 (IAPDVAPTGA…KGADHGTVKG (174 aa)).

This sequence in the N-terminal section; belongs to the MoaC family. The protein in the C-terminal section; belongs to the MoaB/Mog family.

It catalyses the reaction (8S)-3',8-cyclo-7,8-dihydroguanosine 5'-triphosphate = cyclic pyranopterin phosphate + diphosphate. Its pathway is cofactor biosynthesis; molybdopterin biosynthesis. Functionally, catalyzes the conversion of (8S)-3',8-cyclo-7,8-dihydroguanosine 5'-triphosphate to cyclic pyranopterin monophosphate (cPMP). The sequence is that of Molybdenum cofactor biosynthesis bifunctional protein (moaCB) from Synechococcus elongatus (strain ATCC 33912 / PCC 7942 / FACHB-805) (Anacystis nidulans R2).